A 67-amino-acid chain; its full sequence is Small ribosomal subunit protein eS17 (67 aa).

This sequence belongs to the eukaryotic ribosomal protein eS17 family.

This chain is Small ribosomal subunit protein eS17, found in Thermococcus onnurineus (strain NA1).